A 577-amino-acid polypeptide reads, in one-letter code: Proline--tRNA ligase (577 aa).

It belongs to the class-II aminoacyl-tRNA synthetase family. ProS type 1 subfamily. Homodimer.

It is found in the cytoplasm. It carries out the reaction tRNA(Pro) + L-proline + ATP = L-prolyl-tRNA(Pro) + AMP + diphosphate. Its function is as follows. Catalyzes the attachment of proline to tRNA(Pro) in a two-step reaction: proline is first activated by ATP to form Pro-AMP and then transferred to the acceptor end of tRNA(Pro). As ProRS can inadvertently accommodate and process non-cognate amino acids such as alanine and cysteine, to avoid such errors it has two additional distinct editing activities against alanine. One activity is designated as 'pretransfer' editing and involves the tRNA(Pro)-independent hydrolysis of activated Ala-AMP. The other activity is designated 'posttransfer' editing and involves deacylation of mischarged Ala-tRNA(Pro). The misacylated Cys-tRNA(Pro) is not edited by ProRS. This Helicobacter pylori (strain HPAG1) protein is Proline--tRNA ligase.